A 438-amino-acid polypeptide reads, in one-letter code: Na(+)/H(+) antiporter NhaA 2 (438 aa).

Helical transmembrane passes span 21-41, 66-86, 102-122, 130-150, 160-180, 183-203, 206-226, 308-328, 341-361, 376-396, and 410-430; these read SGGIVLLGATVLALVLANSPW, LHHWINDGLMAVFFFLVGLEL, MLPIAAAFGGMLVPALIFHFI, KGWGIPMATDIAFALGVLALL, IFLTALAIVDDLGAVLVIALF, GELAVGKLLVALVLLLILIAG, LGVQSLNFYGLLGFCLWVVLL, WVIFGVIPIFALANAGLVLQL, LGVALGLLLGKPLGILFFSWI, WMDVFGVGILGGIGFTMSLFI, and AKLGIFIASMLAGAAGFTVLS.

The protein belongs to the NhaA Na(+)/H(+) (TC 2.A.33) antiporter family.

The protein resides in the cell inner membrane. The enzyme catalyses Na(+)(in) + 2 H(+)(out) = Na(+)(out) + 2 H(+)(in). Na(+)/H(+) antiporter that extrudes sodium in exchange for external protons. This chain is Na(+)/H(+) antiporter NhaA 2, found in Syntrophotalea carbinolica (strain DSM 2380 / NBRC 103641 / GraBd1) (Pelobacter carbinolicus).